A 367-amino-acid polypeptide reads, in one-letter code: Flagellar P-ring protein (367 aa).

A signal peptide spans 1 to 21 (MYVFKALAGIVLALVATLAHA).

The protein belongs to the FlgI family. As to quaternary structure, the basal body constitutes a major portion of the flagellar organelle and consists of four rings (L,P,S, and M) mounted on a central rod.

Its subcellular location is the periplasm. The protein resides in the bacterial flagellum basal body. Functionally, assembles around the rod to form the L-ring and probably protects the motor/basal body from shearing forces during rotation. In Salmonella arizonae (strain ATCC BAA-731 / CDC346-86 / RSK2980), this protein is Flagellar P-ring protein.